The chain runs to 357 residues: tRNA-specific 2-thiouridylase MnmA (357 aa).

ATP-binding positions include 3–10 (AMSGGVDS) and Leu-29. Residue Cys-98 is the Nucleophile of the active site. Residues Cys-98 and Cys-196 are joined by a disulfide bond. Gly-122 serves as a coordination point for ATP. Residues 146–148 (KDQ) form an interaction with tRNA region. Catalysis depends on Cys-196, which acts as the Cysteine persulfide intermediate. The tract at residues 302–303 (RY) is interaction with tRNA.

This sequence belongs to the MnmA/TRMU family.

It localises to the cytoplasm. It carries out the reaction S-sulfanyl-L-cysteinyl-[protein] + uridine(34) in tRNA + AH2 + ATP = 2-thiouridine(34) in tRNA + L-cysteinyl-[protein] + A + AMP + diphosphate + H(+). Functionally, catalyzes the 2-thiolation of uridine at the wobble position (U34) of tRNA, leading to the formation of s(2)U34. The sequence is that of tRNA-specific 2-thiouridylase MnmA from Moorella thermoacetica (strain ATCC 39073 / JCM 9320).